A 1498-amino-acid polypeptide reads, in one-letter code: DNA-directed RNA polymerase subunit beta' (1498 aa).

4 residues coordinate Zn(2+): cysteine 67, cysteine 69, cysteine 82, and cysteine 85. 3 residues coordinate Mg(2+): aspartate 499, aspartate 501, and aspartate 503. 4 residues coordinate Zn(2+): cysteine 867, cysteine 943, cysteine 950, and cysteine 953.

The protein belongs to the RNA polymerase beta' chain family. The RNAP catalytic core consists of 2 alpha, 1 beta, 1 beta' and 1 omega subunit. When a sigma factor is associated with the core the holoenzyme is formed, which can initiate transcription. It depends on Mg(2+) as a cofactor. Zn(2+) serves as cofactor.

The catalysed reaction is RNA(n) + a ribonucleoside 5'-triphosphate = RNA(n+1) + diphosphate. DNA-dependent RNA polymerase catalyzes the transcription of DNA into RNA using the four ribonucleoside triphosphates as substrates. In Chlorobium phaeobacteroides (strain BS1), this protein is DNA-directed RNA polymerase subunit beta'.